The primary structure comprises 179 residues: Probable chorismate pyruvate-lyase (179 aa).

Arg-82, Leu-120, and Glu-165 together coordinate substrate.

The protein belongs to the UbiC family.

Its subcellular location is the cytoplasm. The enzyme catalyses chorismate = 4-hydroxybenzoate + pyruvate. It participates in cofactor biosynthesis; ubiquinone biosynthesis. Its function is as follows. Removes the pyruvyl group from chorismate, with concomitant aromatization of the ring, to provide 4-hydroxybenzoate (4HB) for the ubiquinone pathway. The sequence is that of Probable chorismate pyruvate-lyase from Vibrio parahaemolyticus serotype O3:K6 (strain RIMD 2210633).